The following is an 81-amino-acid chain: Photosystem I iron-sulfur center (81 aa).

4Fe-4S ferredoxin-type domains are found at residues 2 to 31 (SHAV…MVPW) and 39 to 68 (IASA…VRVY). The [4Fe-4S] cluster site is built by C11, C14, C17, C21, C48, C51, C54, and C58.

As to quaternary structure, the eukaryotic PSI reaction center is composed of at least 11 subunits. The cofactor is [4Fe-4S] cluster.

It is found in the plastid. The protein localises to the chloroplast thylakoid membrane. The catalysed reaction is reduced [plastocyanin] + hnu + oxidized [2Fe-2S]-[ferredoxin] = oxidized [plastocyanin] + reduced [2Fe-2S]-[ferredoxin]. Its function is as follows. Apoprotein for the two 4Fe-4S centers FA and FB of photosystem I (PSI); essential for photochemical activity. FB is the terminal electron acceptor of PSI, donating electrons to ferredoxin. The C-terminus interacts with PsaA/B/D and helps assemble the protein into the PSI complex. Required for binding of PsaD and PsaE to PSI. PSI is a plastocyanin/cytochrome c6-ferredoxin oxidoreductase, converting photonic excitation into a charge separation, which transfers an electron from the donor P700 chlorophyll pair to the spectroscopically characterized acceptors A0, A1, FX, FA and FB in turn. In Ostreococcus tauri, this protein is Photosystem I iron-sulfur center.